Here is a 356-residue protein sequence, read N- to C-terminus: Putative ankyrin repeat protein R599 (356 aa).

6 ANK repeats span residues 111–143 (NDDILLCTAIINCSSECLLYLLDKGIPIDFCDN), 152–182 (RLEKYIYTTRKNKSSCDMLKIVIDRGGNVNT), 183–213 (HNYEPLYSAVNDNNFDKIKLLVENGANKLSD), 215–238 (KRKITNTNLEIFQYLIDNRVELEV), 239–266 (NFDDIFLQSIINDDSECMKLFIELGANI), and 267–298 (NSIPTLELTKIIINARHEILEILINYGLDINN).

This is Putative ankyrin repeat protein R599 from Acanthamoeba polyphaga (Amoeba).